The sequence spans 393 residues: tRNA(Met) cytidine acetate ligase (393 aa).

Residues G81, N142, and R167 each coordinate ATP.

It belongs to the TmcAL family.

The protein localises to the cytoplasm. The catalysed reaction is cytidine(34) in elongator tRNA(Met) + acetate + ATP = N(4)-acetylcytidine(34) in elongator tRNA(Met) + AMP + diphosphate. In terms of biological role, catalyzes the formation of N(4)-acetylcytidine (ac(4)C) at the wobble position of elongator tRNA(Met), using acetate and ATP as substrates. First activates an acetate ion to form acetyladenylate (Ac-AMP) and then transfers the acetyl group to tRNA to form ac(4)C34. This Bacillus cereus (strain AH820) protein is tRNA(Met) cytidine acetate ligase.